Here is a 2326-residue protein sequence, read N- to C-terminus: Chondroitin sulfate proteoglycan 4 (2326 aa).

The N-terminal stretch at 1–29 is a signal peptide; that stretch reads MLLSPGHPLSAPALALILTLALLVRSTAP. 2 consecutive Laminin G-like domains span residues 30 to 193 and 203 to 381; these read ASFF…HEGC and VGLG…AAGC. Residues 30–640 form a globular or compact configuration stabilized by disulfide bonds region; the sequence is ASFFGENHLE…HRGGPAQDLT (611 aa). Residues 30–640 are neurite growth inhibition; that stretch reads ASFFGENHLE…HRGGPAQDLT (611 aa). Residues 30 to 2225 are Extracellular-facing; the sequence is ASFFGENHLE…SGFLGFLEAN (2196 aa). The N-linked (GlcNAc...) asparagine glycan is linked to N130. C170 and C193 are oxidised to a cystine. Residue N349 is glycosylated (N-linked (GlcNAc...) asparagine). A disulfide bridge connects residues C355 and C381. N-linked (GlcNAc...) asparagine glycosylation occurs at N428. 3 CSPG repeats span residues 429–524, 554–646, and 663–765; these read FTQL…LEVS, PRIV…VSDG, and AIQI…LEVQ. Positions 575–1044 are interaction with COL6A2; that stretch reads GPEIFQAYDP…RGGQRLLTTD (470 aa). The interaction with COL5A1 stretch occupies residues 632–1450; the sequence is RGGPAQDLTF…SETQTDGFIL (819 aa). 2 N-linked (GlcNAc...) asparagine glycosylation sites follow: N686 and N773. 2 CSPG repeats span residues 784–882 and 902–993; these read TVWM…FRVT and NAPV…FVAT. An O-linked (Xyl...) (chondroitin sulfate) serine glycan is attached at S999. 9 CSPG repeats span residues 1022–1114, 1130–1220, 1242–1341, 1360–1453, 1477–1567, 1585–1683, 1708–1807, 1836–1928, and 1945–2033; these read APVQ…VSDG, YLHV…LSVA, PLQL…LDVA, TVIP…LLAN, PPVI…LSDG, LLSL…LLLS, PSRL…FRAH, PPQP…MSDG, and TIEV…VLAL. Residues N1135 and N1206 are each glycosylated (N-linked (GlcNAc...) asparagine). N1368 and N1453 each carry an N-linked (GlcNAc...) asparagine glycan. Positions 1590–2225 are neurite growth inhibition; it reads GSRKLTVCPE…SGFLGFLEAN (636 aa). The cysteine-containing stretch occupies residues 1591–2225; the sequence is SRKLTVCPES…SGFLGFLEAN (635 aa). A glycan (N-linked (GlcNAc...) asparagine) is linked at N1649. N-linked (GlcNAc...) asparagine glycosylation is found at N1913, N2020, N2038, N2044, and N2079. Residues 2042-2151 form a CSPG 15 repeat; that stretch reads TVNVTVQALL…TGDRLTLELQ (110 aa). The interval 2187–2210 is disordered; it reads RTETEKTGKSTPTGQPGQAASSPM. Over residues 2195-2210 the composition is skewed to polar residues; that stretch reads KSTPTGQPGQAASSPM. The chain crosses the membrane as a helical span at residues 2226–2250; it reads MFSVIIPVCLVLLLLALILPLLFYL. The Cytoplasmic segment spans residues 2251–2326; sequence RKRNKTGKHD…PALRNGQYWV (76 aa). A Phosphothreonine; by PKC/PRKCA modification is found at T2256. Positions 2324 to 2326 match the PDZ-binding motif; the sequence is YWV.

Interacts with GRIP1, GRIP2 and GRIA2. Forms a ternary complex with GRIP1 and GRIA2. Interacts with ITGA4 through its chondroitin sulfate glycosaminoglycan. Interacts with BCAR1, CDC42 and ACK1. Interacts with MMP16. Interacts with the first PDZ domain of MPDZ. Interacts with PRKCA. Interacts with LGALS3 and the integrin composed of ITGB1 and ITGA3. Binds TNC, laminin-1, COL5A1 and COL6A2. Interacts with PLG and angiostatin. Binds FGF2 and PDGFA. N-glycosylated. In terms of processing, O-glycosylated; contains glycosaminoglycan chondroitin sulfate which are required for proper localization and function in stress fiber formation. Involved in interaction with MMP16 and ITGA4. Post-translationally, phosphorylation by PRKCA regulates its subcellular location and function in cell motility. In terms of tissue distribution, neural cells and also extraneural tissues, especially in the developing mesenchyme.

Its subcellular location is the cell membrane. It localises to the apical cell membrane. The protein localises to the cell projection. The protein resides in the lamellipodium membrane. It is found in the cell surface. Proteoglycan playing a role in cell proliferation and migration which stimulates endothelial cells motility during microvascular morphogenesis. May also inhibit neurite outgrowth and growth cone collapse during axon regeneration. Cell surface receptor for collagen alpha 2(VI) which may confer cells ability to migrate on that substrate. Binds through its extracellular N-terminus growth factors, extracellular matrix proteases modulating their activity. May regulate MPP16-dependent degradation and invasion of type I collagen participating in melanoma cells invasion properties. May modulate the plasminogen system by enhancing plasminogen activation and inhibiting angiostatin. Also functions as a signal transducing protein by binding through its cytoplasmic C-terminus scaffolding and signaling proteins. May promote retraction fiber formation and cell polarization through Rho GTPase activation. May stimulate alpha-4, beta-1 integrin-mediated adhesion and spreading by recruiting and activating a signaling cascade through CDC42, ACK1 and BCAR1. May activate FAK and ERK1/ERK2 signaling cascades. This Rattus norvegicus (Rat) protein is Chondroitin sulfate proteoglycan 4 (Cspg4).